The sequence spans 122 residues: Small ribosomal subunit protein uS13 (122 aa).

Residues 98-116 are compositionally biased toward basic residues; that stretch reads VRGQKTKTNARTRKGRRKT. The tract at residues 98-122 is disordered; that stretch reads VRGQKTKTNARTRKGRRKTVGAATK.

This sequence belongs to the universal ribosomal protein uS13 family. As to quaternary structure, part of the 30S ribosomal subunit. Forms a loose heterodimer with protein S19. Forms two bridges to the 50S subunit in the 70S ribosome.

Functionally, located at the top of the head of the 30S subunit, it contacts several helices of the 16S rRNA. In the 70S ribosome it contacts the 23S rRNA (bridge B1a) and protein L5 of the 50S subunit (bridge B1b), connecting the 2 subunits; these bridges are implicated in subunit movement. Contacts the tRNAs in the A and P-sites. This chain is Small ribosomal subunit protein uS13, found in Campylobacter fetus subsp. fetus (strain 82-40).